A 400-amino-acid polypeptide reads, in one-letter code: Elongation factor Tu-B (400 aa).

Residues 10-209 (KPHVNVGTIG…VVDEYIPTPE (200 aa)) enclose the tr-type G domain. The G1 stretch occupies residues 19-26 (GHVDHGKT). Position 19-26 (19-26 (GHVDHGKT)) interacts with GTP. Residue Thr-26 coordinates Mg(2+). The segment at 60 to 64 (GITIN) is G2. The tract at residues 81–84 (DCPG) is G3. GTP-binding positions include 81 to 85 (DCPGH) and 136 to 139 (NKAD). Residues 136-139 (NKAD) are G4. Positions 174–176 (SAL) are G5.

This sequence belongs to the TRAFAC class translation factor GTPase superfamily. Classic translation factor GTPase family. EF-Tu/EF-1A subfamily. In terms of assembly, monomer.

The protein resides in the cytoplasm. The catalysed reaction is GTP + H2O = GDP + phosphate + H(+). GTP hydrolase that promotes the GTP-dependent binding of aminoacyl-tRNA to the A-site of ribosomes during protein biosynthesis. The protein is Elongation factor Tu-B of Caldanaerobacter subterraneus subsp. tengcongensis (strain DSM 15242 / JCM 11007 / NBRC 100824 / MB4) (Thermoanaerobacter tengcongensis).